The chain runs to 314 residues: Malate dehydrogenase (314 aa).

Residues 7–12 (GAGNVG) and D32 each bind NAD(+). Substrate is bound by residues R81 and R87. NAD(+) contacts are provided by residues N94 and 117–119 (VAN). Residues N119 and R150 each contribute to the substrate site. H174 functions as the Proton acceptor in the catalytic mechanism.

Belongs to the LDH/MDH superfamily. MDH type 3 family.

It carries out the reaction (S)-malate + NAD(+) = oxaloacetate + NADH + H(+). Catalyzes the reversible oxidation of malate to oxaloacetate. This is Malate dehydrogenase from Salinibacter ruber (strain DSM 13855 / M31).